A 39-amino-acid polypeptide reads, in one-letter code: Photosystem I reaction center subunit IX (39 aa).

Residues 4-24 traverse the membrane as a helical segment; the sequence is FLTTAPVVAAIWFTLTAGILI.

This sequence belongs to the PsaJ family.

It localises to the cellular thylakoid membrane. Functionally, may help in the organization of the PsaE and PsaF subunits. In Synechococcus sp. (strain CC9311), this protein is Photosystem I reaction center subunit IX.